A 236-amino-acid polypeptide reads, in one-letter code: Biosynthetic peptidoglycan transglycosylase (236 aa).

A helical transmembrane segment spans residues 12–31 (ALFWFAAGSIVLVLVFRWVP).

The protein belongs to the glycosyltransferase 51 family.

It localises to the cell inner membrane. It carries out the reaction [GlcNAc-(1-&gt;4)-Mur2Ac(oyl-L-Ala-gamma-D-Glu-L-Lys-D-Ala-D-Ala)](n)-di-trans,octa-cis-undecaprenyl diphosphate + beta-D-GlcNAc-(1-&gt;4)-Mur2Ac(oyl-L-Ala-gamma-D-Glu-L-Lys-D-Ala-D-Ala)-di-trans,octa-cis-undecaprenyl diphosphate = [GlcNAc-(1-&gt;4)-Mur2Ac(oyl-L-Ala-gamma-D-Glu-L-Lys-D-Ala-D-Ala)](n+1)-di-trans,octa-cis-undecaprenyl diphosphate + di-trans,octa-cis-undecaprenyl diphosphate + H(+). It participates in cell wall biogenesis; peptidoglycan biosynthesis. Functionally, peptidoglycan polymerase that catalyzes glycan chain elongation from lipid-linked precursors. The sequence is that of Biosynthetic peptidoglycan transglycosylase from Pseudomonas putida (strain W619).